Consider the following 134-residue polypeptide: Large ribosomal subunit protein uL16c (134 aa).

It belongs to the universal ribosomal protein uL16 family. In terms of assembly, part of the 50S ribosomal subunit.

It localises to the plastid. It is found in the chloroplast. This chain is Large ribosomal subunit protein uL16c, found in Atropa belladonna (Belladonna).